Here is a 228-residue protein sequence, read N- to C-terminus: MSKLLFLSLALWASRSPGYTETALVALSQPRVQCHASRYPVAVDCSWTPLQAPNSTRSTSFIATYRLGVATQQQSQPCLQRSPQASRCTIPDVHLFSTVPYMLNVTAVHPGGASSSLLAFVAERIIKPDPPEGVRLRTAGQRLQVLWHPPASWPFPDIFSLKYRLRYRRRGASHFRQVGPIEATTFTLRNSKPHAKYCIQVSAQDLTDYGKPSDWSLPGQVESAPHKP.

A signal peptide spans 1 to 18; that stretch reads MSKLLFLSLALWASRSPG. Fibronectin type-III domains lie at 26–124 and 127–224; these read ALSQ…VAER and KPDP…VESA. N-linked (GlcNAc...) asparagine glycans are attached at residues asparagine 54 and asparagine 104.

Belongs to the type I cytokine receptor family. Type 3 subfamily. In terms of assembly, heterodimer with IL27/IL27A; not disulfide-linked. This heterodimer is known as interleukin IL-27. Heterodimer with IL12A; not disulfide-linked. This heterodimer is known as interleukin IL-35. Interacts with SQSTM1.

The protein localises to the secreted. Its function is as follows. Associates with IL27 to form the IL-27 interleukin, a heterodimeric cytokine which functions in innate immunity. IL-27 has pro- and anti-inflammatory properties, that can regulate T-helper cell development, suppress T-cell proliferation, stimulate cytotoxic T-cell activity, induce isotype switching in B-cells, and that has diverse effects on innate immune cells. Among its target cells are CD4 T-helper cells which can differentiate in type 1 effector cells (TH1), type 2 effector cells (TH2) and IL17 producing helper T-cells (TH17). It drives rapid clonal expansion of naive but not memory CD4 T-cells. It also strongly synergizes with IL-12 to trigger interferon-gamma/IFN-gamma production of naive CD4 T-cells, binds to the cytokine receptor WSX-1/TCCR. Another important role of IL-27 is its antitumor activity as well as its antiangiogenic activity with activation of production of antiangiogenic chemokines. The chain is Interleukin-27 subunit beta (Ebi3) from Mus musculus (Mouse).